A 102-amino-acid chain; its full sequence is Small ribosomal subunit protein uS10 (102 aa).

The protein belongs to the universal ribosomal protein uS10 family. In terms of assembly, part of the 30S ribosomal subunit.

Involved in the binding of tRNA to the ribosomes. This Streptococcus pneumoniae (strain CGSP14) protein is Small ribosomal subunit protein uS10.